Reading from the N-terminus, the 97-residue chain is Osteocalcin (97 aa).

An N-terminal signal peptide occupies residues 1–18 (MKTLAFLVLCSLAAICLT). The propeptide occupies 19 to 52 (SDASTGSQPASDNPADEGMFVERDQASAVVRQKR). The Gla domain occupies 53-93 (AAGQLSLTQLESLREVCELNLACEHMMDTEGIIAAYTAYYG). Glu63, Glu67, Glu70, and Glu76 together coordinate Ca(2+). 4-carboxyglutamate occurs at positions 63, 67, and 70. Cys69 and Cys75 form a disulfide bridge.

The protein belongs to the osteocalcin/matrix Gla protein family. Gamma-carboxyglutamate residues are formed by vitamin K dependent carboxylation by GGCX. These residues are essential for the binding of calcium.

The protein localises to the secreted. The carboxylated form is one of the main organic components of the bone matrix, which constitutes 1-2% of the total bone protein. The carboxylated form binds strongly to apatite and calcium. The chain is Osteocalcin (bglap) from Sparus aurata (Gilthead sea bream).